The primary structure comprises 131 residues: Type-5 thionin (131 aa).

The first 29 residues, 1–29, serve as a signal peptide directing secretion; it reads MGGGQKGLESAIVCLLVLGLVLEQVQVEG. The propeptide at 67-131 is acidic domain; that stretch reads LASVRSSDEP…GDTLLASLDD (65 aa).

The protein belongs to the plant thionin (TC 1.C.44) family. In terms of processing, is disulfide-linked. Developing endosperm.

It localises to the secreted. Thionins are small plant proteins which are toxic to animal cells. They seem to exert their toxic effect at the level of the cell membrane. Their precise function is not known. The polypeptide is Type-5 thionin (TTHV) (Triticum aestivum (Wheat)).